We begin with the raw amino-acid sequence, 179 residues long: Large ribosomal subunit protein uL5 (179 aa).

The protein belongs to the universal ribosomal protein uL5 family. In terms of assembly, part of the 50S ribosomal subunit; part of the 5S rRNA/L5/L18/L25 subcomplex. Contacts the 5S rRNA and the P site tRNA. Forms a bridge to the 30S subunit in the 70S ribosome.

Functionally, this is one of the proteins that bind and probably mediate the attachment of the 5S RNA into the large ribosomal subunit, where it forms part of the central protuberance. In the 70S ribosome it contacts protein S13 of the 30S subunit (bridge B1b), connecting the 2 subunits; this bridge is implicated in subunit movement. Contacts the P site tRNA; the 5S rRNA and some of its associated proteins might help stabilize positioning of ribosome-bound tRNAs. The chain is Large ribosomal subunit protein uL5 from Rickettsia africae (strain ESF-5).